A 576-amino-acid chain; its full sequence is Formate--tetrahydrofolate ligase (576 aa).

64-71 (TPLGEGKT) contacts ATP.

It belongs to the formate--tetrahydrofolate ligase family.

The catalysed reaction is (6S)-5,6,7,8-tetrahydrofolate + formate + ATP = (6R)-10-formyltetrahydrofolate + ADP + phosphate. The protein operates within one-carbon metabolism; tetrahydrofolate interconversion. The sequence is that of Formate--tetrahydrofolate ligase from Aeromonas hydrophila subsp. hydrophila (strain ATCC 7966 / DSM 30187 / BCRC 13018 / CCUG 14551 / JCM 1027 / KCTC 2358 / NCIMB 9240 / NCTC 8049).